Reading from the N-terminus, the 577-residue chain is Arginine--tRNA ligase (577 aa).

Positions 122–132 match the 'HIGH' region motif; that stretch reads PNVAKEMHVGH.

The protein belongs to the class-I aminoacyl-tRNA synthetase family. As to quaternary structure, monomer.

The protein localises to the cytoplasm. It carries out the reaction tRNA(Arg) + L-arginine + ATP = L-arginyl-tRNA(Arg) + AMP + diphosphate. In Vibrio parahaemolyticus serotype O3:K6 (strain RIMD 2210633), this protein is Arginine--tRNA ligase.